We begin with the raw amino-acid sequence, 147 residues long: Large ribosomal subunit protein uL13 (147 aa).

This sequence belongs to the universal ribosomal protein uL13 family. Part of the 50S ribosomal subunit.

In terms of biological role, this protein is one of the early assembly proteins of the 50S ribosomal subunit, although it is not seen to bind rRNA by itself. It is important during the early stages of 50S assembly. The polypeptide is Large ribosomal subunit protein uL13 (Mycolicibacterium gilvum (strain PYR-GCK) (Mycobacterium gilvum (strain PYR-GCK))).